The primary structure comprises 370 residues: (5-formylfuran-3-yl)methyl phosphate transaminase (370 aa).

N6-(pyridoxal phosphate)lysine is present on Lys222.

This sequence belongs to the class-I pyridoxal-phosphate-dependent aminotransferase family. In terms of assembly, homodimer. Pyridoxal 5'-phosphate is required as a cofactor.

The protein localises to the cytoplasm. The enzyme catalyses 4-(hydroxymethyl)-2-furancarboxaldehyde phosphate + L-alanine = [5-(aminomethyl)-3-furyl]methyl phosphate + pyruvate. It participates in cofactor biosynthesis; methanofuran biosynthesis. Catalyzes the transamination reaction between 4-(hydroxymethyl)-2-furancarboxaldehyde phosphate (4-HFC-P) and alanine to produce pyruvate and 5-(aminomethyl)-3-furanmethanol phosphate (F1-P), the precursor for the furan moiety in methanofuran. The chain is (5-formylfuran-3-yl)methyl phosphate transaminase from Methanocaldococcus jannaschii (strain ATCC 43067 / DSM 2661 / JAL-1 / JCM 10045 / NBRC 100440) (Methanococcus jannaschii).